The following is an 82-amino-acid chain: MSSINYPFVTEKAMMLLDENKLQFIVDTRSNKKQILEDVEKMYGFKVKSVRTMTTMKGMKKAVLAFEEPEAAHEIATRIGLM.

Belongs to the universal ribosomal protein uL23 family. In terms of assembly, part of the 50S ribosomal subunit. Contacts protein L29.

In terms of biological role, binds to 23S rRNA. One of the proteins that surrounds the polypeptide exit tunnel on the outside of the ribosome. The polypeptide is Large ribosomal subunit protein uL23 (Methanosarcina acetivorans (strain ATCC 35395 / DSM 2834 / JCM 12185 / C2A)).